The following is an 87-amino-acid chain: Small ribosomal subunit protein bS20 (87 aa).

It belongs to the bacterial ribosomal protein bS20 family.

Functionally, binds directly to 16S ribosomal RNA. This chain is Small ribosomal subunit protein bS20, found in Corynebacterium jeikeium (strain K411).